The following is a 102-amino-acid chain: Acid shock protein (102 aa).

A signal peptide spans 1–21 (MKKVLALVVAAAMGLSSAAFA). Positions 21-41 (AAETTTTPAPTATTTKAAPAK) are enriched in low complexity. Residues 21 to 102 (AAETTTTPAP…PAKPAAQPAA (82 aa)) form a disordered region. Positions 22-58 (AETTTTPAPTATTTKAAPAKTTHHKKQHKAAPAQKAQ) are excised as a propeptide. A compositionally biased stretch (basic residues) spans 80–90 (AAKKHAKKHSH). A compositionally biased stretch (low complexity) spans 91 to 102 (QQPAKPAAQPAA).

It belongs to the Asr family. Proteolytic processing gives rise to the active protein.

It localises to the periplasm. Functionally, required for growth and/or survival at acidic conditions. This is Acid shock protein from Escherichia coli (strain K12 / MC4100 / BW2952).